We begin with the raw amino-acid sequence, 921 residues long: Ubiquitin carboxyl-terminal hydrolase 11 (921 aa).

Low complexity predominate over residues 1-16 (MAAVAADPAAAAVPAS). A disordered region spans residues 1–29 (MAAVAADPAAAAVPASAEDRETQPEAMPD). The DUSP domain maps to 28–133 (PDLDQQWRQI…DQPPIERKVI (106 aa)). At Lys-194 the chain carries N6-acetyllysine. A USP domain is found at 257-889 (CGLTNLGNTC…AAYVLFYQRQ (633 aa)). Cys-266 acts as the Nucleophile in catalysis. The tract at residues 592–697 (TKPTSDDDDG…DRTTSPEEAQ (106 aa)) is disordered. Position 596 is a phosphoserine (Ser-596). Residues 597–624 (DDDDGDEKGDENEDEDVEDDSSSEEEKE) are compositionally biased toward acidic residues. Polar residues-rich tracts occupy residues 657–666 (LDNSLHTSQW) and 676–697 (FTLQ…EEAQ). Ser-692 carries the post-translational modification Phosphoserine. His-847 serves as the catalytic Proton acceptor. Residues 893-921 (RRQSQTASSETPTSPASSSTPNSDIMDVN) form a disordered region. Residues 895–915 (QSQTASSETPTSPASSSTPNS) show a composition bias toward low complexity. Ser-906 is modified (phosphoserine).

The protein belongs to the peptidase C19 family. In terms of assembly, monomer. Associated component of the Polycomb group (PcG) multiprotein PRC1-like complex. Interacts with RANBP9/RANBPM. Interacts with BRCA2. Interacts with CHUK/IKKA. Interacts with NFKBIA. Interacts with SPRY3, RAE1, MYCBP2/PAM, and KCTD6.

It localises to the nucleus. It is found in the cytoplasm. Its subcellular location is the chromosome. The enzyme catalyses Thiol-dependent hydrolysis of ester, thioester, amide, peptide and isopeptide bonds formed by the C-terminal Gly of ubiquitin (a 76-residue protein attached to proteins as an intracellular targeting signal).. Its function is as follows. Protease that can remove conjugated ubiquitin from target proteins and polyubiquitin chains. Inhibits the degradation of target proteins by the proteasome. Cleaves preferentially 'Lys-6' and 'Lys-63'-linked ubiquitin chains. Has lower activity with 'Lys-11' and 'Lys-33'-linked ubiquitin chains, and extremely low activity with 'Lys-27', 'Lys-29' and 'Lys-48'-linked ubiquitin chains (in vitro). Plays a role in the regulation of pathways leading to NF-kappa-B activation. Plays a role in the regulation of DNA repair after double-stranded DNA breaks. Acts as a chromatin regulator via its association with the Polycomb group (PcG) multiprotein PRC1-like complex; may act by deubiquitinating components of the PRC1-like comple. Promotes cell proliferation by deubiquitinating phosphorylated E2F1x. The sequence is that of Ubiquitin carboxyl-terminal hydrolase 11 from Rattus norvegicus (Rat).